A 664-amino-acid chain; its full sequence is Gametogenetin-binding protein 2 (664 aa).

Disordered stretches follow at residues Gln375–Glu425 and Lys447–Ser476. Residues Glu376 to Lys388 show a composition bias toward basic residues. The segment covering Pro452–Gly475 has biased composition (polar residues).

The protein resides in the cytoplasm. Its function is as follows. May be involved in spermatogenesis. This is Gametogenetin-binding protein 2 (ggnbp2) from Xenopus laevis (African clawed frog).